The primary structure comprises 360 residues: Protein RecA (360 aa).

ATP is bound at residue 64–71 (GHESSGKT). The tract at residues 333–360 (QEQVQPEPKSKQSKSKQASEQATQDELI) is disordered.

Belongs to the RecA family.

It localises to the cytoplasm. Its function is as follows. Can catalyze the hydrolysis of ATP in the presence of single-stranded DNA, the ATP-dependent uptake of single-stranded DNA by duplex DNA, and the ATP-dependent hybridization of homologous single-stranded DNAs. It interacts with LexA causing its activation and leading to its autocatalytic cleavage. The chain is Protein RecA from Francisella philomiragia subsp. philomiragia (strain ATCC 25017 / CCUG 19701 / FSC 153 / O#319-036).